The primary structure comprises 208 residues: Thymidylate kinase (208 aa).

Residue 11–18 (GIEGAGKT) coordinates ATP.

This sequence belongs to the thymidylate kinase family.

The enzyme catalyses dTMP + ATP = dTDP + ADP. Functionally, phosphorylation of dTMP to form dTDP in both de novo and salvage pathways of dTTP synthesis. This chain is Thymidylate kinase, found in Hahella chejuensis (strain KCTC 2396).